We begin with the raw amino-acid sequence, 783 residues long: BMP/retinoic acid-inducible neural-specific protein 2 (783 aa).

The first 33 residues, 1–33 (MRWPCSSRFRGLWPEAAPWAVLLALGVPGWVLA), serve as a signal peptide directing secretion. Residues 85-281 (RYRIYREFAR…FVAAALSYIT (197 aa)) form the MACPF domain. 6 N-linked (GlcNAc...) asparagine glycosylation sites follow: N185, N354, N473, N579, N626, and N658.

This sequence belongs to the BRINP family. Expressed in olfactory bulb, cerebellum and neuronal layers in hippocampus.

Its subcellular location is the secreted. Inhibits neuronal cell proliferation by negative regulation of the cell cycle transition. This chain is BMP/retinoic acid-inducible neural-specific protein 2 (Brinp2), found in Rattus norvegicus (Rat).